The following is a 368-amino-acid chain: Histidinol-phosphate aminotransferase (368 aa).

N6-(pyridoxal phosphate)lysine is present on lysine 229.

Belongs to the class-II pyridoxal-phosphate-dependent aminotransferase family. Histidinol-phosphate aminotransferase subfamily. As to quaternary structure, homodimer. Pyridoxal 5'-phosphate is required as a cofactor.

The enzyme catalyses L-histidinol phosphate + 2-oxoglutarate = 3-(imidazol-4-yl)-2-oxopropyl phosphate + L-glutamate. Its pathway is amino-acid biosynthesis; L-histidine biosynthesis; L-histidine from 5-phospho-alpha-D-ribose 1-diphosphate: step 7/9. The polypeptide is Histidinol-phosphate aminotransferase (Acidovorax ebreus (strain TPSY) (Diaphorobacter sp. (strain TPSY))).